The primary structure comprises 525 residues: Peptide chain release factor 3 (525 aa).

In terms of domain architecture, tr-type G spans 8-276 (AMRRTFAIIS…AFVKEAPPPQ (269 aa)). Residues 17–24 (SHPDAGKT), 85–89 (DTPGH), and 139–142 (NKMD) each bind GTP.

It belongs to the TRAFAC class translation factor GTPase superfamily. Classic translation factor GTPase family. PrfC subfamily.

Its subcellular location is the cytoplasm. Functionally, increases the formation of ribosomal termination complexes and stimulates activities of RF-1 and RF-2. It binds guanine nucleotides and has strong preference for UGA stop codons. It may interact directly with the ribosome. The stimulation of RF-1 and RF-2 is significantly reduced by GTP and GDP, but not by GMP. This chain is Peptide chain release factor 3, found in Coxiella burnetii (strain CbuK_Q154) (Coxiella burnetii (strain Q154)).